The chain runs to 152 residues: D-aminoacyl-tRNA deacylase (152 aa).

The Gly-cisPro motif, important for rejection of L-amino acids motif lies at 137–138 (GP).

The protein belongs to the DTD family. Homodimer.

It is found in the cytoplasm. The enzyme catalyses glycyl-tRNA(Ala) + H2O = tRNA(Ala) + glycine + H(+). It carries out the reaction a D-aminoacyl-tRNA + H2O = a tRNA + a D-alpha-amino acid + H(+). An aminoacyl-tRNA editing enzyme that deacylates mischarged D-aminoacyl-tRNAs. Also deacylates mischarged glycyl-tRNA(Ala), protecting cells against glycine mischarging by AlaRS. Acts via tRNA-based rather than protein-based catalysis; rejects L-amino acids rather than detecting D-amino acids in the active site. By recycling D-aminoacyl-tRNA to D-amino acids and free tRNA molecules, this enzyme counteracts the toxicity associated with the formation of D-aminoacyl-tRNA entities in vivo and helps enforce protein L-homochirality. In Geobacter sulfurreducens (strain ATCC 51573 / DSM 12127 / PCA), this protein is D-aminoacyl-tRNA deacylase.